The following is a 189-amino-acid chain: Holliday junction branch migration complex subunit RuvA (189 aa).

The domain I stretch occupies residues 1–63 (MIHALNGKVE…DDGISLYGFL (63 aa)). Positions 64–135 (EVIKLKLFEK…ELKDTIKELD (72 aa)) are domain II. The interval 135–139 (DVSIN) is flexible linker. The tract at residues 140–189 (EKDRKVLEAIEALVTLGFNRNQAKKAVNKVAAKDDKLDDIIKKALRFLSR) is domain III.

This sequence belongs to the RuvA family. Homotetramer. Forms an RuvA(8)-RuvB(12)-Holliday junction (HJ) complex. HJ DNA is sandwiched between 2 RuvA tetramers; dsDNA enters through RuvA and exits via RuvB. An RuvB hexamer assembles on each DNA strand where it exits the tetramer. Each RuvB hexamer is contacted by two RuvA subunits (via domain III) on 2 adjacent RuvB subunits; this complex drives branch migration. In the full resolvosome a probable DNA-RuvA(4)-RuvB(12)-RuvC(2) complex forms which resolves the HJ.

The protein localises to the cytoplasm. Its function is as follows. The RuvA-RuvB-RuvC complex processes Holliday junction (HJ) DNA during genetic recombination and DNA repair, while the RuvA-RuvB complex plays an important role in the rescue of blocked DNA replication forks via replication fork reversal (RFR). RuvA specifically binds to HJ cruciform DNA, conferring on it an open structure. The RuvB hexamer acts as an ATP-dependent pump, pulling dsDNA into and through the RuvAB complex. HJ branch migration allows RuvC to scan DNA until it finds its consensus sequence, where it cleaves and resolves the cruciform DNA. This is Holliday junction branch migration complex subunit RuvA from Thermosipho africanus (strain TCF52B).